Reading from the N-terminus, the 509-residue chain is 2-isopropylmalate synthase (509 aa).

In terms of domain architecture, Pyruvate carboxyltransferase spans 4-266 (VRIFDTTLRD…YTGIKTEEIY (263 aa)). Asp-13, His-201, His-203, and Asn-237 together coordinate Mn(2+). Residues 390 to 509 (TLDYFHISTG…FDYQAKGEKQ (120 aa)) are regulatory domain.

This sequence belongs to the alpha-IPM synthase/homocitrate synthase family. LeuA type 1 subfamily. As to quaternary structure, homodimer. The cofactor is Mn(2+).

It localises to the cytoplasm. The enzyme catalyses 3-methyl-2-oxobutanoate + acetyl-CoA + H2O = (2S)-2-isopropylmalate + CoA + H(+). It functions in the pathway amino-acid biosynthesis; L-leucine biosynthesis; L-leucine from 3-methyl-2-oxobutanoate: step 1/4. Its function is as follows. Catalyzes the condensation of the acetyl group of acetyl-CoA with 3-methyl-2-oxobutanoate (2-ketoisovalerate) to form 3-carboxy-3-hydroxy-4-methylpentanoate (2-isopropylmalate). This Carboxydothermus hydrogenoformans (strain ATCC BAA-161 / DSM 6008 / Z-2901) protein is 2-isopropylmalate synthase.